A 402-amino-acid polypeptide reads, in one-letter code: MREVLGTALTSSSQKALLLGSGELGKEVVIELQRLGVEVVAVDRYDRAPAMHVAHRRYVIDMLDYDQVVDVVRRERPDVIIPEVEAINTDALVDLEKEGYFVVPNARAVKITMNRIELRRLAAEKVGVPTTRYAFAHNEDEAAEACEKVGYPCLIKPEMSSSGHGHTLASSPEEAREGFKRALKEARGKSERAIVEEFVEIDRELTALTYRHDTGNGIETVPLPPVEHKRPKGIYYYYESWHPATVNDEVVKKAKDIAVKVVNELGGLGIFGVEILVTKDGRVLFSEVSPRPHDTGLVTLASMELSEFAIHARAVLGLPVPEPKLLTPAASRVVLAEEALEPPCLKGVGEALKVKGVQLRWFAKPRSYKERRMGVLLATGSTVEEALERVRRAAGFLKVVKC.

Residues 23–24 (EL) and Glu83 contribute to the N(1)-(5-phospho-beta-D-ribosyl)glycinamide site. ATP-binding positions include Arg115, Lys156, 196-199 (EEFV), and Glu204. Residues 120 to 316 (RLAAEKVGVP…EFAIHARAVL (197 aa)) enclose the ATP-grasp domain. The Mg(2+) site is built by Glu274 and Glu287. N(1)-(5-phospho-beta-D-ribosyl)glycinamide contacts are provided by residues Asp294, Lys364, and 371-372 (RR).

This sequence belongs to the PurK/PurT family. Homodimer.

The enzyme catalyses N(1)-(5-phospho-beta-D-ribosyl)glycinamide + formate + ATP = N(2)-formyl-N(1)-(5-phospho-beta-D-ribosyl)glycinamide + ADP + phosphate + H(+). Its pathway is purine metabolism; IMP biosynthesis via de novo pathway; N(2)-formyl-N(1)-(5-phospho-D-ribosyl)glycinamide from N(1)-(5-phospho-D-ribosyl)glycinamide (formate route): step 1/1. Its function is as follows. Involved in the de novo purine biosynthesis. Catalyzes the transfer of formate to 5-phospho-ribosyl-glycinamide (GAR), producing 5-phospho-ribosyl-N-formylglycinamide (FGAR). Formate is provided by PurU via hydrolysis of 10-formyl-tetrahydrofolate. This chain is Formate-dependent phosphoribosylglycinamide formyltransferase, found in Ignicoccus hospitalis (strain KIN4/I / DSM 18386 / JCM 14125).